An 886-amino-acid polypeptide reads, in one-letter code: Microsomal triacylglycerol transfer protein (886 aa).

An N-terminal signal peptide occupies residues 1–27; that stretch reads MENKNKKCLRTLLLLALFLGLLEDGKT. The region spanning 30–653 is the Vitellogenin domain; that stretch reads IAPNSQQIFK…SQASSFKLGI (624 aa). Asparagine 358, asparagine 484, asparagine 502, and asparagine 616 each carry an N-linked (GlcNAc...) asparagine glycan.

The protein localises to the endoplasmic reticulum. It is found in the golgi apparatus. The enzyme catalyses a 1,2-diacyl-sn-glycero-3-phosphocholine(in) = a 1,2-diacyl-sn-glycero-3-phosphocholine(out). It carries out the reaction a 1,2-diacyl-sn-glycero-3-phosphoethanolamine(in) = a 1,2-diacyl-sn-glycero-3-phosphoethanolamine(out). Its function is as follows. Catalyzes the transport of phospholipids such as phosphatidylethanolamine (1,2-diacyl-sn-glycero-3-phosphoethanolamine) and phosphatidylcholine (1,2-diacyl-sn-glycero-3-phosphocholine) between membranes. Required for the assembly and secretion of plasma lipoproteins that contain apolipoprotein B. This chain is Microsomal triacylglycerol transfer protein, found in Drosophila melanogaster (Fruit fly).